The sequence spans 612 residues: Elongation factor 4 (612 aa).

A tr-type G domain is found at 11-193; sequence KHIRNFSIVA…RIVTDISAPT (183 aa). GTP-binding positions include 23–28 and 140–143; these read DHGKST and NKID.

It belongs to the TRAFAC class translation factor GTPase superfamily. Classic translation factor GTPase family. LepA subfamily.

Its subcellular location is the cell membrane. The enzyme catalyses GTP + H2O = GDP + phosphate + H(+). In terms of biological role, required for accurate and efficient protein synthesis under certain stress conditions. May act as a fidelity factor of the translation reaction, by catalyzing a one-codon backward translocation of tRNAs on improperly translocated ribosomes. Back-translocation proceeds from a post-translocation (POST) complex to a pre-translocation (PRE) complex, thus giving elongation factor G a second chance to translocate the tRNAs correctly. Binds to ribosomes in a GTP-dependent manner. The protein is Elongation factor 4 of Lactobacillus delbrueckii subsp. bulgaricus (strain ATCC 11842 / DSM 20081 / BCRC 10696 / JCM 1002 / NBRC 13953 / NCIMB 11778 / NCTC 12712 / WDCM 00102 / Lb 14).